The primary structure comprises 351 residues: Phosphoribosylformylglycinamidine cyclo-ligase (351 aa).

This sequence belongs to the AIR synthase family.

The protein resides in the cytoplasm. It catalyses the reaction 2-formamido-N(1)-(5-O-phospho-beta-D-ribosyl)acetamidine + ATP = 5-amino-1-(5-phospho-beta-D-ribosyl)imidazole + ADP + phosphate + H(+). The protein operates within purine metabolism; IMP biosynthesis via de novo pathway; 5-amino-1-(5-phospho-D-ribosyl)imidazole from N(2)-formyl-N(1)-(5-phospho-D-ribosyl)glycinamide: step 2/2. This is Phosphoribosylformylglycinamidine cyclo-ligase from Burkholderia multivorans (strain ATCC 17616 / 249).